The sequence spans 131 residues: Fumarate reductase subunit C (131 aa).

The next 3 helical transmembrane spans lie at Glu-30–Leu-50, Phe-63–His-83, and Ile-109–Leu-129.

Belongs to the FrdC family. As to quaternary structure, part of an enzyme complex containing four subunits: a flavoprotein (FrdA), an iron-sulfur protein (FrdB), and two hydrophobic anchor proteins (FrdC and FrdD).

The protein localises to the cell inner membrane. Functionally, two distinct, membrane-bound, FAD-containing enzymes are responsible for the catalysis of fumarate and succinate interconversion; fumarate reductase is used in anaerobic growth, and succinate dehydrogenase is used in aerobic growth. Anchors the catalytic components of the fumarate reductase complex to the cell inner membrane, binds quinones. In Shigella dysenteriae serotype 1 (strain Sd197), this protein is Fumarate reductase subunit C.